Here is a 361-residue protein sequence, read N- to C-terminus: MRVTDFHFDLPDELIARYPTAERSASRLLYLNGNTGEYQDQQFNDLLEHIHSGDLLIFNNTRVIPARLYGRKASGGKLEVLVERVLDEHRCLAHIRSSKAPKENAEIFLGEDKLGEGNGFKAIMVARYDALFELKFEASQPLFDLLQQAGHMPLPPYIDRPDEDADQERYQTVYSKVLGAVAAPTAGLHFDHQMLQKLQEKGVQTAFVTLHVGAGTFQPVRVETIEEHKMHAEYAEVSQDVVDKILATKAQGKRVICVGTTSVRSIESAAQAAEKEGKLIAPFYSDTTIFLYPGKTFRIVDALVTNFHLPESTLIMLVSAFAGFKNCMNAYQHAVESQYRFFSYGDAMFITKNENALGDVP.

It belongs to the QueA family. In terms of assembly, monomer.

Its subcellular location is the cytoplasm. The enzyme catalyses 7-aminomethyl-7-carbaguanosine(34) in tRNA + S-adenosyl-L-methionine = epoxyqueuosine(34) in tRNA + adenine + L-methionine + 2 H(+). It functions in the pathway tRNA modification; tRNA-queuosine biosynthesis. Transfers and isomerizes the ribose moiety from AdoMet to the 7-aminomethyl group of 7-deazaguanine (preQ1-tRNA) to give epoxyqueuosine (oQ-tRNA). The chain is S-adenosylmethionine:tRNA ribosyltransferase-isomerase from Glaesserella parasuis serovar 5 (strain SH0165) (Haemophilus parasuis).